The sequence spans 308 residues: Pseudouridine-5'-phosphate glycosidase (308 aa).

The active-site Proton donor is glutamate 28. 2 residues coordinate substrate: lysine 89 and valine 109. Residue aspartate 141 participates in Mn(2+) binding. A substrate-binding site is contributed by 143-145; the sequence is SAD. Residue lysine 162 is the Nucleophile of the active site.

It belongs to the pseudouridine-5'-phosphate glycosidase family. Homotrimer. It depends on Mn(2+) as a cofactor.

It carries out the reaction D-ribose 5-phosphate + uracil = psi-UMP + H2O. Functionally, catalyzes the reversible cleavage of pseudouridine 5'-phosphate (PsiMP) to ribose 5-phosphate and uracil. Functions biologically in the cleavage direction, as part of a pseudouridine degradation pathway. This is Pseudouridine-5'-phosphate glycosidase from Brachyspira hyodysenteriae (strain ATCC 49526 / WA1).